Here is a 558-residue protein sequence, read N- to C-terminus: Formate--tetrahydrofolate ligase 2 (558 aa).

Residue 67-74 (TPAGEGKT) participates in ATP binding.

The protein belongs to the formate--tetrahydrofolate ligase family.

The enzyme catalyses (6S)-5,6,7,8-tetrahydrofolate + formate + ATP = (6R)-10-formyltetrahydrofolate + ADP + phosphate. The protein operates within one-carbon metabolism; tetrahydrofolate interconversion. This is Formate--tetrahydrofolate ligase 2 from Desulfitobacterium hafniense (strain Y51).